Consider the following 138-residue polypeptide: Large ribosomal subunit protein bL19 (138 aa).

It belongs to the bacterial ribosomal protein bL19 family.

This protein is located at the 30S-50S ribosomal subunit interface and may play a role in the structure and function of the aminoacyl-tRNA binding site. The protein is Large ribosomal subunit protein bL19 of Leptospira interrogans serogroup Icterohaemorrhagiae serovar copenhageni (strain Fiocruz L1-130).